The sequence spans 349 residues: Isopentenyl-diphosphate delta-isomerase (349 aa).

9-10 (RK) serves as a coordination point for substrate. FMN is bound by residues 65–67 (AMT), S95, and N124. Residue 95-97 (STH) participates in substrate binding. Q154 serves as a coordination point for substrate. E155 serves as a coordination point for Mg(2+). FMN is bound by residues K186, S211, T216, 262 to 264 (GLR), and 283 to 284 (SR).

It belongs to the IPP isomerase type 2 family. As to quaternary structure, homooctamer. Dimer of tetramers. FMN serves as cofactor. It depends on NADPH as a cofactor. Mg(2+) is required as a cofactor.

The protein resides in the cytoplasm. It carries out the reaction isopentenyl diphosphate = dimethylallyl diphosphate. In terms of biological role, involved in the biosynthesis of isoprenoids. Catalyzes the 1,3-allylic rearrangement of the homoallylic substrate isopentenyl (IPP) to its allylic isomer, dimethylallyl diphosphate (DMAPP). This chain is Isopentenyl-diphosphate delta-isomerase, found in Staphylococcus aureus.